The sequence spans 492 residues: Spindle assembly abnormal protein 6 (492 aa).

A PISA domain is found at 46-98 (SGEKELKFEISRSDDFEFLFSETLNNEKYQILARDHDLTVDFDAFPKVIIQHL). A coiled-coil region spans residues 192 to 407 (KSADELASLR…KIAHYRAQRF (216 aa)).

In terms of assembly, nine homodimers form a cartwheel structure with an internal diameter of 23 nM and radial spokes connecting to the microtubule triplets. Interacts with sas-5.

It is found in the cytoplasm. The protein resides in the cytoskeleton. Its subcellular location is the microtubule organizing center. It localises to the centrosome. The protein localises to the centriole. Central scaffolding component of the centrioles ensuring their 9-fold symmetry. Required for centrosome biogenesis and duplication. This is Spindle assembly abnormal protein 6 from Caenorhabditis elegans.